We begin with the raw amino-acid sequence, 564 residues long: MTHTSSSNPRLDESRTIIAPTGTALTAKSWLTEAPLRMLMNNLHPDVAEHPHALVVYGGIGRAARNWQCYDKIVEVLTRLEDDETLLVQSGKPVGVFKTHTNAPRVLIANSNIVPHWANWEHFNELDKQGLMMYGQMTAGSWIYIGSQGIVQGTYETFVAMARQHFDGKAAGRWVLTGGLGGMGGAQPLAATMAGFSMLAVECDESRIDYRLRTGYVDRKATTLDEALAIIEESKQSGTPVSVGLLGNAADVYADIVQRGIVPDITTDQTSAHDPLNGYLPQGWSMEQAAEMRLKDEPAVVIAAKKSMAIQVQAMLDLQKSGSATVDYGNNIRQMALEEGVANAFDFPGFVPAYIRPLFCEGIGPFRWAALSGDPEDIYKTDQKVKELIPDNPHLHNWLDMARERIQFQGLPARICWVGLKDRARLGKAFNEMVKNGELKAPIVIGRDHLDSGSVASPNRETEGMMDGSDAVSDWPLLNALLNTASGATWVSLHHGGGVGMGFSQHSGMVIVCDGTDDAAERVGRVLHNDPATGVMRHADAGYDIAINCAKEQNLDLPMLSEPK.

Residues 58–59, Gln136, 182–184, Glu202, Arg207, 248–249, 269–273, 279–280, and Tyr328 each bind NAD(+); these read GG, GMG, NA, QTSAH, and YL. The active site involves Cys416. Gly498 serves as a coordination point for NAD(+).

The protein belongs to the urocanase family. It depends on NAD(+) as a cofactor.

The protein resides in the cytoplasm. The catalysed reaction is 4-imidazolone-5-propanoate = trans-urocanate + H2O. It functions in the pathway amino-acid degradation; L-histidine degradation into L-glutamate; N-formimidoyl-L-glutamate from L-histidine: step 2/3. Functionally, catalyzes the conversion of urocanate to 4-imidazolone-5-propionate. This is Urocanate hydratase from Aliivibrio salmonicida (strain LFI1238) (Vibrio salmonicida (strain LFI1238)).